Consider the following 469-residue polypeptide: Glutamate--tRNA ligase (469 aa).

Residues 11–21 (PSPTGFIHLGN) carry the 'HIGH' region motif. Positions 118–131 (GEKPRYDGTWRPEP) are enriched in basic and acidic residues. The tract at residues 118-139 (GEKPRYDGTWRPEPGKVLPEPP) is disordered. The 'KMSKS' region motif lies at 243–247 (KMSKR). ATP is bound at residue lysine 246.

It belongs to the class-I aminoacyl-tRNA synthetase family. Glutamate--tRNA ligase type 1 subfamily. As to quaternary structure, monomer.

It is found in the cytoplasm. The enzyme catalyses tRNA(Glu) + L-glutamate + ATP = L-glutamyl-tRNA(Glu) + AMP + diphosphate. Its function is as follows. Catalyzes the attachment of glutamate to tRNA(Glu) in a two-step reaction: glutamate is first activated by ATP to form Glu-AMP and then transferred to the acceptor end of tRNA(Glu). The protein is Glutamate--tRNA ligase of Burkholderia pseudomallei (strain 668).